Here is a 241-residue protein sequence, read N- to C-terminus: Tetraspanin-1 (241 aa).

Residues 1–11 (MQCFSFIKTMM) are Cytoplasmic-facing. Residues 12-32 (ILFNLLIFLCGAALLAVGIWV) form a helical membrane-spanning segment. Residues 33-52 (SIDGASFLKIFGPLSSSAMQ) are Extracellular-facing. Residues 53 to 73 (FVNVGYFLIAAGVVVFALGFL) form a helical membrane-spanning segment. Topologically, residues 74 to 88 (GCYGAKTESKCALVT) are cytoplasmic. A helical transmembrane segment spans residues 89-109 (FFFILLLIFIAEVAAAVVALV). Over 110-211 (YTTMAEHFLT…NQLLYDIRTN (102 aa)) the chain is Extracellular. 4 N-linked (GlcNAc...) asparagine glycosylation sites follow: Asn141, Asn154, Asn178, and Asn184. A helical membrane pass occupies residues 212-232 (AVTVGGVAAGIGGLELAAMIV). The Cytoplasmic portion of the chain corresponds to 233–241 (SMYLYCNLQ).

The protein belongs to the tetraspanin (TM4SF) family. In terms of assembly, interacts with SLC19A2. Interacts with NTRK1/TRKA.

The protein localises to the cell membrane. It localises to the lysosome membrane. Its function is as follows. Structural component of specialized membrane microdomains known as tetraspanin-enriched microdomains (TERMs), which act as platforms for receptor clustering and signaling. Participates thereby in diverse biological functions such as cell signal transduction, adhesion, migration and protein trafficking. Regulates neuronal differentiation in response to NGF by facilitating NGF-mediated activation of NTRK1/TRKA receptor tyrosine kinase and subsequent downstream signaling pathways. Plays a role in the inhibition of TNFalpha-induced apoptosis. Mechanistically, inhibits the NF-kappa-B signaling pathway by blocking phosphorylation of CHUK. Also promotes the stability of the thiamine transporter 1/SLC19A2 in intestinal epithelial cells leading to an increase of thiamine uptake process. The polypeptide is Tetraspanin-1 (TSPAN1) (Homo sapiens (Human)).